We begin with the raw amino-acid sequence, 754 residues long: 1,4-alpha-glucan branching enzyme GlgB (754 aa).

Asp-431 (nucleophile) is an active-site residue. Glu-484 serves as the catalytic Proton donor.

It belongs to the glycosyl hydrolase 13 family. GlgB subfamily. Monomer.

The catalysed reaction is Transfers a segment of a (1-&gt;4)-alpha-D-glucan chain to a primary hydroxy group in a similar glucan chain.. Its pathway is glycan biosynthesis; glycogen biosynthesis. Catalyzes the formation of the alpha-1,6-glucosidic linkages in glycogen by scission of a 1,4-alpha-linked oligosaccharide from growing alpha-1,4-glucan chains and the subsequent attachment of the oligosaccharide to the alpha-1,6 position. This Prochlorococcus marinus (strain MIT 9215) protein is 1,4-alpha-glucan branching enzyme GlgB.